The sequence spans 165 residues: Polcalcin Jun o 2 (165 aa).

4 consecutive EF-hand domains span residues 22–57 (QSVH…LGSD), 58–86 (VGEA…FVDL), 91–126 (ASVK…VGEP), and 127–162 (CTIE…EMTD). Positions 35, 37, 39, 41, 46, 71, 73, 75, 77, 82, 104, 106, 108, 110, 115, 140, 142, 144, and 151 each coordinate Ca(2+).

This Juniperus oxycedrus (Prickly juniper) protein is Polcalcin Jun o 2.